We begin with the raw amino-acid sequence, 417 residues long: Cysteate synthase (417 aa).

Lysine 102 is subject to N6-(pyridoxal phosphate)lysine. 2 residues coordinate pyridoxal 5'-phosphate: asparagine 128 and threonine 380.

This sequence belongs to the threonine synthase family. Cysteate synthase subfamily. Homotrimer. The cofactor is pyridoxal 5'-phosphate.

It carries out the reaction O-phospho-L-serine + sulfite + H(+) = L-cysteate + phosphate. The protein operates within cofactor biosynthesis; coenzyme M biosynthesis. Functionally, specifically catalyzes the beta-elimination of phosphate from L-phosphoserine and the beta-addition of sulfite to the dehydroalanine intermediate to produce L-cysteate. In Methanocella arvoryzae (strain DSM 22066 / NBRC 105507 / MRE50), this protein is Cysteate synthase.